The chain runs to 307 residues: Metapyrocatechase (307 aa).

VOC domains are found at residues 7–122 (RPGH…LYAD) and 150–269 (RFDH…VFCG). 3 residues coordinate Fe cation: His153, His214, and Glu265.

The protein belongs to the extradiol ring-cleavage dioxygenase family. In terms of assembly, homotetramer. It depends on Fe(2+) as a cofactor.

The enzyme catalyses catechol + O2 = (2Z,4E)-2-hydroxy-6-oxohexa-2,4-dienoate + H(+). It functions in the pathway xenobiotic degradation; toluene degradation. This is Metapyrocatechase (xylE) from Pseudomonas putida (Arthrobacter siderocapsulatus).